The primary structure comprises 447 residues: tRNA (guanine(37)-N(1))-methyltransferase (447 aa).

S-adenosyl-L-methionine is bound by residues His241, 285 to 286 (DL), and 313 to 314 (DV).

It belongs to the class I-like SAM-binding methyltransferase superfamily. TRM5/TYW2 family. As to quaternary structure, monomer.

It localises to the mitochondrion matrix. It is found in the nucleus. The protein resides in the cytoplasm. The catalysed reaction is guanosine(37) in tRNA + S-adenosyl-L-methionine = N(1)-methylguanosine(37) in tRNA + S-adenosyl-L-homocysteine + H(+). In terms of biological role, specifically methylates the N1 position of guanosine-37 in various cytoplasmic and mitochondrial tRNAs. Methylation is not dependent on the nature of the nucleoside 5' of the target nucleoside. This is the first step in the biosynthesis of wybutosine (yW), a modified base adjacent to the anticodon of tRNAs and required for accurate decoding. The polypeptide is tRNA (guanine(37)-N(1))-methyltransferase (Giardia intestinalis (strain ATCC 50803 / WB clone C6) (Giardia lamblia)).